A 235-amino-acid chain; its full sequence is MOB kinase activator 2 (235 aa).

A disordered region spans residues 1 to 22 (MDWLMGKSKAKPNGKKPAAEEK). Zn(2+)-binding residues include Cys78, Cys83, His157, and His162. The disordered stretch occupies residues 213–235 (NSGATGDGANSGASGAQNHVKER).

Belongs to the MOB1/phocein family. Binds STK38 and STK38L. Post-translationally, phosphorylated.

It is found in the nucleus. It localises to the cytoplasm. The protein localises to the perinuclear region. In terms of biological role, stimulates the autophosphorylation and kinase activity of STK38 and STK38L. The polypeptide is MOB kinase activator 2 (Mob2) (Mus musculus (Mouse)).